A 487-amino-acid polypeptide reads, in one-letter code: Steroid 21-hydroxylase (487 aa).

Heme b-binding residues include Arg-92 and Lys-117. Residue Arg-228 coordinates 17alpha-hydroxyprogesterone. Arg-228 contacts progesterone. Positions 357, 418, and 420 each coordinate heme b.

Belongs to the cytochrome P450 family. Heme b is required as a cofactor.

The protein localises to the endoplasmic reticulum membrane. It localises to the microsome membrane. It carries out the reaction progesterone + reduced [NADPH--hemoprotein reductase] + O2 = 21-hydroxyprogesterone + oxidized [NADPH--hemoprotein reductase] + H2O + H(+). It catalyses the reaction 17alpha-hydroxyprogesterone + reduced [NADPH--hemoprotein reductase] + O2 = 11-deoxycortisol + oxidized [NADPH--hemoprotein reductase] + H2O + H(+). A cytochrome P450 monooxygenase that plays a major role in adrenal steroidogenesis. Catalyzes the hydroxylation at C-21 of progesterone and 17alpha-hydroxyprogesterone to respectively form 11-deoxycorticosterone and 11-deoxycortisol, intermediate metabolites in the biosynthetic pathway of mineralocorticoids and glucocorticoids. Mechanistically, uses molecular oxygen inserting one oxygen atom into a substrate, and reducing the second into a water molecule, with two electrons provided by NADPH via cytochrome P450 reductase (CPR; NADPH-ferrihemoprotein reductase). The sequence is that of Steroid 21-hydroxylase (Cyp21) from Mus musculus (Mouse).